Consider the following 376-residue polypeptide: Chaperone protein DnaJ (376 aa).

A J domain is found at 5–70 (DYYEVLGVKK…QKRAAYDQYG (66 aa)). The segment at 131 to 209 (GVTKEIRIPT…CHGHGRVEKS (79 aa)) adopts a CR-type zinc-finger fold. Zn(2+) contacts are provided by Cys144, Cys147, Cys161, Cys164, Cys183, Cys186, Cys197, and Cys200. CXXCXGXG motif repeat units follow at residues 144–151 (CDVCHGSG), 161–168 (CSTCRGAG), 183–190 (CPTCHGSG), and 197–204 (CNKCHGHG).

The protein belongs to the DnaJ family. Homodimer. Zn(2+) serves as cofactor.

It localises to the cytoplasm. In terms of biological role, participates actively in the response to hyperosmotic and heat shock by preventing the aggregation of stress-denatured proteins and by disaggregating proteins, also in an autonomous, DnaK-independent fashion. Unfolded proteins bind initially to DnaJ; upon interaction with the DnaJ-bound protein, DnaK hydrolyzes its bound ATP, resulting in the formation of a stable complex. GrpE releases ADP from DnaK; ATP binding to DnaK triggers the release of the substrate protein, thus completing the reaction cycle. Several rounds of ATP-dependent interactions between DnaJ, DnaK and GrpE are required for fully efficient folding. Also involved, together with DnaK and GrpE, in the DNA replication of plasmids through activation of initiation proteins. This chain is Chaperone protein DnaJ, found in Yersinia enterocolitica serotype O:8 / biotype 1B (strain NCTC 13174 / 8081).